The following is a 115-amino-acid chain: Holo-[acyl-carrier-protein] synthase (115 aa).

Mg(2+) is bound by residues aspartate 8 and glutamate 50.

The protein belongs to the P-Pant transferase superfamily. AcpS family. The cofactor is Mg(2+).

It is found in the cytoplasm. It carries out the reaction apo-[ACP] + CoA = holo-[ACP] + adenosine 3',5'-bisphosphate + H(+). In terms of biological role, transfers the 4'-phosphopantetheine moiety from coenzyme A to a Ser of acyl-carrier-protein. This Pseudarthrobacter chlorophenolicus (strain ATCC 700700 / DSM 12829 / CIP 107037 / JCM 12360 / KCTC 9906 / NCIMB 13794 / A6) (Arthrobacter chlorophenolicus) protein is Holo-[acyl-carrier-protein] synthase.